Consider the following 219-residue polypeptide: Elongation factor Ts (219 aa).

Residues 82-85 (TDFV) form an involved in Mg(2+) ion dislocation from EF-Tu region.

It belongs to the EF-Ts family.

It localises to the cytoplasm. Functionally, associates with the EF-Tu.GDP complex and induces the exchange of GDP to GTP. It remains bound to the aminoacyl-tRNA.EF-Tu.GTP complex up to the GTP hydrolysis stage on the ribosome. This Synechococcus sp. (strain CC9902) protein is Elongation factor Ts.